The sequence spans 525 residues: ATP synthase subunit alpha (525 aa).

169-176 serves as a coordination point for ATP; that stretch reads GDRQTGKT.

This sequence belongs to the ATPase alpha/beta chains family. F-type ATPases have 2 components, CF(1) - the catalytic core - and CF(0) - the membrane proton channel. CF(1) has five subunits: alpha(3), beta(3), gamma(1), delta(1), epsilon(1). CF(0) has three main subunits: a(1), b(2) and c(9-12). The alpha and beta chains form an alternating ring which encloses part of the gamma chain. CF(1) is attached to CF(0) by a central stalk formed by the gamma and epsilon chains, while a peripheral stalk is formed by the delta and b chains.

The protein resides in the cell membrane. The catalysed reaction is ATP + H2O + 4 H(+)(in) = ADP + phosphate + 5 H(+)(out). In terms of biological role, produces ATP from ADP in the presence of a proton gradient across the membrane. The alpha chain is a regulatory subunit. The chain is ATP synthase subunit alpha from Mycoplasma mycoides subsp. mycoides SC (strain CCUG 32753 / NCTC 10114 / PG1).